The sequence spans 541 residues: Formimidoyltransferase-cyclodeaminase (541 aa).

The tract at residues 1 to 181 is formiminotransferase N-subdomain; it reads MAKLVECVPN…GATVTGARTF (181 aa). The active-site For formimidoyltransferase activity is H82. Position 163 to 172 (163 to 172) interacts with folate; it reads GPPAFVPQWG. The tract at residues 182 to 326 is formiminotransferase C-subdomain; the sequence is LIAYNINLLC…PRERIIEYLV (145 aa). The segment at 327–334 is linker; sequence QAGQEDKG. Positions 335 to 541 are cyclodeaminase/cyclohydrolase; it reads LVTKPLGAFV…VLALLEKREA (207 aa). Residue D412 is the For cyclodeaminase activity of the active site.

It in the C-terminal section; belongs to the cyclodeaminase/cyclohydrolase family. In the N-terminal section; belongs to the formiminotransferase family. As to quaternary structure, homooctamer, including four polyglutamate binding sites. The subunits are arranged as a tetramer of dimers, and form a planar ring-shaped structure.

The protein localises to the cytoplasm. It is found in the cytosol. Its subcellular location is the golgi apparatus. The protein resides in the cytoskeleton. It localises to the microtubule organizing center. The protein localises to the centrosome. It is found in the centriole. It carries out the reaction 5-formimidoyltetrahydrofolate + L-glutamate = N-formimidoyl-L-glutamate + (6S)-5,6,7,8-tetrahydrofolate. It catalyses the reaction 5-formimidoyltetrahydrofolate + 2 H(+) = (6R)-5,10-methenyltetrahydrofolate + NH4(+). It functions in the pathway amino-acid degradation; L-histidine degradation into L-glutamate; L-glutamate from N-formimidoyl-L-glutamate (transferase route): step 1/1. Functionally, folate-dependent enzyme, that displays both transferase and deaminase activity. Serves to channel one-carbon units from formiminoglutamate to the folate pool. In terms of biological role, binds and promotes bundling of vimentin filaments originating from the Golgi. The sequence is that of Formimidoyltransferase-cyclodeaminase (FTCD) from Gallus gallus (Chicken).